The primary structure comprises 329 residues: Protein-arginine N-acetylglucosaminyltransferase NleB1 (329 aa).

R13 carries an N-beta-linked (GlcNAc) arginine; by autocatalysis glycan. 48–50 (QWF) contributes to the UDP-N-acetyl-alpha-D-glucosamine binding site. A glycan (N-beta-linked (GlcNAc) arginine; by autocatalysis) is linked at R53. Y72 is a UDP-N-acetyl-alpha-D-glucosamine binding site. R159 carries N-beta-linked (GlcNAc) arginine; by autocatalysis glycosylation. Position 219 to 222 (219 to 222 (YLDA)) interacts with UDP-N-acetyl-alpha-D-glucosamine. Positions 221–223 (DAD) match the DXD motif motif. D223 serves as a coordination point for Mn(2+). E253 acts as the Proton acceptor in catalysis. An N-beta-linked (GlcNAc) arginine; by autocatalysis glycan is attached at R293. 2 residues coordinate Mn(2+): N320 and S322. UDP-N-acetyl-alpha-D-glucosamine is bound by residues S322 and 327 to 329 (SSW).

This sequence belongs to the glycosyltransferase NleB family. Mn(2+) is required as a cofactor. In terms of processing, auto-glycosylated: arginine GlcNAcylation is required for activity toward death domain-containing host target proteins.

It localises to the secreted. The protein resides in the host cytoplasm. It catalyses the reaction L-arginyl-[protein] + UDP-N-acetyl-alpha-D-glucosamine = N(omega)-(N-acetyl-beta-D-glucosaminyl)-L-arginyl-[protein] + UDP + H(+). Its function is as follows. Protein-arginine N-acetylglucosaminyltransferase effector that disrupts TNF signaling in infected cells, including NF-kappa-B signaling, apoptosis and necroptosis. Acts by catalyzing the transfer of a single N-acetylglucosamine (GlcNAc) to a conserved arginine residue in the death domain of host proteins FADD, TRADD, FAS, TNFRSF1A/TNFR1, TNFRSF25/DR3 and RIPK1: arginine GlcNAcylation prevents homotypic/heterotypic death domain interactions and assembly of the oligomeric TNF-alpha receptor complex, thereby disrupting TNF signaling. Has preference for host FADD as substrate compared to other death domain-containing proteins. Also acts on host proteins without a death domain: catalyzes arginine GlcNAcylation of HIF1A, thereby regulating host glucose metabolism. Also displays intra-bacterial activity by mediating GlcNAcylation of glutathione synthetase GshB. Catalyzes auto-GlcNAcylation, which is required for activity toward death domain-containing host target proteins. Shows a higher enzymatic activity than NleB2. The polypeptide is Protein-arginine N-acetylglucosaminyltransferase NleB1 (Escherichia coli O127:H6 (strain E2348/69 / EPEC)).